The sequence spans 414 residues: 5-aminolevulinate synthase (414 aa).

Residues arginine 22, serine 133, and lysine 152 each contribute to the substrate site. Residues serine 185, histidine 213, and threonine 241 each contribute to the pyridoxal 5'-phosphate site. Residue lysine 244 is part of the active site. Lysine 244 carries the post-translational modification N6-(pyridoxal phosphate)lysine. Pyridoxal 5'-phosphate contacts are provided by threonine 273 and threonine 274. Position 359 (threonine 359) interacts with substrate.

It belongs to the class-II pyridoxal-phosphate-dependent aminotransferase family. In terms of assembly, homodimer. Pyridoxal 5'-phosphate serves as cofactor.

The enzyme catalyses succinyl-CoA + glycine + H(+) = 5-aminolevulinate + CO2 + CoA. The protein operates within porphyrin-containing compound metabolism; protoporphyrin-IX biosynthesis; 5-aminolevulinate from glycine: step 1/1. This is 5-aminolevulinate synthase (hemA) from Rickettsia prowazekii (strain Madrid E).